Here is a 581-residue protein sequence, read N- to C-terminus: Threonine--tRNA ligase (581 aa).

Residues 185–478 (DHRKLGKELD…LIEHYGGAFP (294 aa)) are catalytic. The Zn(2+) site is built by cysteine 278, histidine 329, and histidine 455.

The protein belongs to the class-II aminoacyl-tRNA synthetase family. Homodimer. Requires Zn(2+) as cofactor.

The protein resides in the cytoplasm. It carries out the reaction tRNA(Thr) + L-threonine + ATP = L-threonyl-tRNA(Thr) + AMP + diphosphate + H(+). Functionally, catalyzes the attachment of threonine to tRNA(Thr) in a two-step reaction: L-threonine is first activated by ATP to form Thr-AMP and then transferred to the acceptor end of tRNA(Thr). Also edits incorrectly charged L-seryl-tRNA(Thr). The chain is Threonine--tRNA ligase from Borreliella afzelii (strain PKo) (Borrelia afzelii).